Consider the following 239-residue polypeptide: DNA oxidative demethylase ALKBH2 (239 aa).

A PCNA-binding motif is present at residues 3 to 7; the sequence is KFLVR. Positions 11–32 are disordered; sequence RDLQGGGEEPAPTGGASGDLKS. Residues 80–82 and 100–102 each bind substrate; these read FGK and YTF. The 106-residue stretch at 130–235 folds into the Fe2OG dioxygenase domain; it reads TFNFVLVNRY…RVNLTFRKIL (106 aa). Asparagine 137, tyrosine 139, and histidine 149 together coordinate 2-oxoglutarate. Fe cation contacts are provided by histidine 149 and aspartate 151. Aspartate 152 contacts substrate. The 2-oxoglutarate site is built by histidine 214, arginine 226, threonine 230, and arginine 232. Histidine 214 is a binding site for Fe cation.

This sequence belongs to the alkB family. As to quaternary structure, interacts with PCNA homotrimer; this interaction is enhanced during the S-phase of the cell cycle. Interacts with nucleolar proteins NCL, UBTF and NPM1. Interacts with XRCC5-XRCC6 heterodimer. Fe(2+) is required as a cofactor. As to expression, detected in liver, testis and kidney (at protein level). Detected in heart and testis.

It localises to the nucleus. The protein localises to the nucleolus. It is found in the nucleoplasm. The enzyme catalyses a methylated nucleobase within DNA + 2-oxoglutarate + O2 = a nucleobase within DNA + formaldehyde + succinate + CO2. It catalyses the reaction an N(1)-methyl-2'-deoxyadenosine in double-stranded DNA + 2-oxoglutarate + O2 = a 2'-deoxyadenosine in double-stranded DNA + formaldehyde + succinate + CO2 + H(+). The catalysed reaction is an N(1)-methyl-2'-deoxyadenosine in single-stranded DNA + 2-oxoglutarate + O2 = a 2'-deoxyadenosine in single-stranded DNA + formaldehyde + succinate + CO2 + H(+). It carries out the reaction an N(3)-methyl-2'-deoxycytidine in double-stranded DNA + 2-oxoglutarate + O2 = a 2'-deoxycytidine in double-stranded DNA + formaldehyde + succinate + CO2 + H(+). The enzyme catalyses an N(3)-methyl-2'-deoxycytidine in single-stranded DNA + 2-oxoglutarate + O2 = a 2'-deoxycytidine in single-stranded DNA + formaldehyde + succinate + CO2 + H(+). It catalyses the reaction a 1,N(6)-etheno-2'-deoxyadenosine in double-stranded DNA + 2-oxoglutarate + O2 + H2O = a 2'-deoxyadenosine in double-stranded DNA + glyoxal + succinate + CO2. The catalysed reaction is a 1,N(6)-etheno-2'-deoxyadenosine in single-stranded DNA + 2-oxoglutarate + O2 + H2O = a 2'-deoxyadenosine in single-stranded DNA + glyoxal + succinate + CO2. It carries out the reaction a 3,N(4)-etheno-2'-deoxycytidine in double-stranded DNA + 2-oxoglutarate + O2 + H2O = a 2'-deoxycytidine in double-stranded DNA + glyoxal + succinate + CO2. The enzyme catalyses a 3,N(4)-etheno-2'-deoxycytidine in single-stranded DNA + 2-oxoglutarate + O2 + H2O = a 2'-deoxycytidine in single-stranded DNA + glyoxal + succinate + CO2. It catalyses the reaction a 1,N(2)-etheno-2'-deoxyguanosine in double-stranded DNA + 2-oxoglutarate + O2 + H2O = a 2'-deoxyguanosine in double-stranded DNA + glyoxal + succinate + CO2. Its activity is regulated as follows. Activated by magnesium ions. Its function is as follows. Dioxygenase that repairs alkylated nucleic acid bases by direct reversal oxidative dealkylation. Can process both double-stranded (ds) and single-stranded (ss) DNA substrates, with a strong preference for dsDNA. Uses molecular oxygen, 2-oxoglutarate and iron as cofactors to oxidize the alkyl groups that are subsequently released as aldehydes, regenerating the undamaged bases. Probes the base pair stability, locates a weakened base pair and flips the damaged base to accommodate the lesion in its active site for efficient catalysis. Repairs monoalkylated bases, specifically N1-methyladenine and N3-methylcytosine, as well as higher order alkyl adducts such as bases modified with exocyclic bridged adducts known as etheno adducts including 1,N6-ethenoadenine, 3,N4-ethenocytosine and 1,N2-ethenoguanine. Acts as a gatekeeper of genomic integrity under alkylation stress. Efficiently repairs alkylated lesions in ribosomal DNA (rDNA). These lesions can cause ss- and dsDNA strand breaks that severely impair rDNA transcription. In a response mechanism to DNA damage, associates with PCNA at replication forks to repair alkylated adducts prior to replication. The polypeptide is DNA oxidative demethylase ALKBH2 (Alkbh2) (Mus musculus (Mouse)).